The sequence spans 457 residues: Multidrug resistance protein MdtK (457 aa).

Transmembrane regions (helical) follow at residues Leu11–Val31, Ala46–Leu66, Trp93–Ile113, Ala127–Leu147, Gly160–Tyr180, Leu188–Met208, Leu243–Val263, Leu283–Phe301, Tyr316–Phe336, Leu357–Val377, Ile387–Gly407, and Pro418–Leu438.

It belongs to the multi antimicrobial extrusion (MATE) (TC 2.A.66.1) family. MdtK subfamily.

It is found in the cell inner membrane. In terms of biological role, multidrug efflux pump that functions probably as a Na(+)/drug antiporter. The sequence is that of Multidrug resistance protein MdtK from Yersinia pseudotuberculosis serotype O:1b (strain IP 31758).